The primary structure comprises 259 residues: MAIAPNTRVLVAGYGLPAEFCVTTLIGMGVEIDKIAVATHREDNRNCGLHSMLRLRNIQFTTAAANSEEFYEFGANFDPDMIISMHYRSLIPGRFLKLAKKGSVNLHPSLLPAYRGTNSVAWVIINGESETGFSYHRMDENFDTGAILLQERISVEETDTAFSLFHRQIARAMLRLEEVILKLDQGDPGFAQLGEASYYARELPFGGVIDPRWSEVQIDRFIRAMFFPPFPPAVLKIDGKVYYVPSIDIYRSLMRGIPS.

(6S)-5,6,7,8-tetrahydrofolate is bound by residues 89–91 (SLI) and 139–143 (DENFD).

The protein belongs to the Fmt family. Homodimer.

The catalysed reaction is GDP-alpha-D-perosamine + (6R)-10-formyltetrahydrofolate = GDP-N-formyl-alpha-D-perosamine + (6S)-5,6,7,8-tetrahydrofolate + H(+). Its pathway is bacterial outer membrane biogenesis; lipopolysaccharide biosynthesis. Functionally, involved in the lipopolysaccharide (LPS) O-antigen biosynthesis. Catalyzes the transfer of a formyl group to GDP-perosamine, leading to the formation of GDP-N-formylperosamine. Is critical for full bacterial virulence. In Brucella abortus (strain 2308), this protein is GDP-perosamine N-formyltransferase.